The chain runs to 946 residues: Bifunctional glutamine synthetase adenylyltransferase/adenylyl-removing enzyme (946 aa).

Residues 1-440 (MKPLSSPLQQ…VFNELIGDDE (440 aa)) form an adenylyl removase region. Residues 449 to 946 (SEQWRELWQD…ASWQKWLVEE (498 aa)) form an adenylyl transferase region.

Belongs to the GlnE family. Mg(2+) serves as cofactor.

The catalysed reaction is [glutamine synthetase]-O(4)-(5'-adenylyl)-L-tyrosine + phosphate = [glutamine synthetase]-L-tyrosine + ADP. The enzyme catalyses [glutamine synthetase]-L-tyrosine + ATP = [glutamine synthetase]-O(4)-(5'-adenylyl)-L-tyrosine + diphosphate. Its function is as follows. Involved in the regulation of glutamine synthetase GlnA, a key enzyme in the process to assimilate ammonia. When cellular nitrogen levels are high, the C-terminal adenylyl transferase (AT) inactivates GlnA by covalent transfer of an adenylyl group from ATP to specific tyrosine residue of GlnA, thus reducing its activity. Conversely, when nitrogen levels are low, the N-terminal adenylyl removase (AR) activates GlnA by removing the adenylyl group by phosphorolysis, increasing its activity. The regulatory region of GlnE binds the signal transduction protein PII (GlnB) which indicates the nitrogen status of the cell. This chain is Bifunctional glutamine synthetase adenylyltransferase/adenylyl-removing enzyme, found in Escherichia coli O45:K1 (strain S88 / ExPEC).